The sequence spans 312 residues: ADIPOR-like receptor IZH4 (312 aa).

The tract at residues 1–38 (MVSLTTIEQSPVKCETTTEKESNDTRGTDSNENAETKE) is disordered. Topologically, residues 1-64 (MVSLTTIEQS…YKNKSSRNES (64 aa)) are cytoplasmic. Residues 16–38 (TTTEKESNDTRGTDSNENAETKE) are compositionally biased toward basic and acidic residues. A helical transmembrane segment spans residues 65–85 (LVALIYLLGSMLSFCLLIFFT). Over 86–101 (DFYLIPLFPTTTTMTD) the chain is Lumenal. The helical transmembrane segment at 102 to 122 (YIVFNFYLLNVFVFCMVHFIY) threads the bilayer. The Cytoplasmic portion of the chain corresponds to 123 to 141 (HFVKNISLQQHLEHWQKFS). A helical membrane pass occupies residues 142–162 (YLSNINLLISSQITILYYLFY). Over 163 to 165 (DYV) the chain is Lumenal. The chain crosses the membrane as a helical span at residues 166–186 (FFFKIFTLLMNFIGLVAYFFI). Over 187 to 201 (LTDKLISSKRFNKTV) the chain is Cytoplasmic. A helical transmembrane segment spans residues 202 to 222 (FFISVSVVCCSLPLLTAIITF). Topologically, residues 223-231 (DGLENLKER) are lumenal. Residues 232–252 (IKVNAITWELVALVAASIIYV) form a helical membrane-spanning segment. At 253-277 (TRFPESLFRRNKKEEGWNHSEYLFH) the chain is on the cytoplasmic side. A helical membrane pass occupies residues 278-298 (LLISGTAFYHFFILIQSYILM). At 299–312 (HSSLNQPELINFKS) the chain is on the lumenal side.

It belongs to the ADIPOR family.

It localises to the endoplasmic reticulum membrane. ADIPOR-like receptor involved in zinc metabolism either by altering membrane sterol content or by directly altering cellular zinc levels. The sequence is that of ADIPOR-like receptor IZH4 (IZH4) from Saccharomyces cerevisiae (strain ATCC 204508 / S288c) (Baker's yeast).